The chain runs to 539 residues: Chaperonin GroEL (539 aa).

Residues T29–P32, D86–T90, G413, N476–A478, and D492 contribute to the ATP site.

This sequence belongs to the chaperonin (HSP60) family. In terms of assembly, forms a cylinder of 14 subunits composed of two heptameric rings stacked back-to-back. Interacts with the co-chaperonin GroES.

Its subcellular location is the cytoplasm. It carries out the reaction ATP + H2O + a folded polypeptide = ADP + phosphate + an unfolded polypeptide.. In terms of biological role, together with its co-chaperonin GroES, plays an essential role in assisting protein folding. The GroEL-GroES system forms a nano-cage that allows encapsulation of the non-native substrate proteins and provides a physical environment optimized to promote and accelerate protein folding. This Staphylococcus epidermidis protein is Chaperonin GroEL.